A 543-amino-acid polypeptide reads, in one-letter code: Alanine aminotransferase 1, mitochondrial (543 aa).

The transit peptide at 1 to 55 (MRRFVIGQAKNLIDQSRRRQLHHHKNLSFVSLIPPFSAPSDSSSRHLSSSSSSDM) directs the protein to the mitochondrion. Positions 43-63 (SSRHLSSSSSSDMSASDSSSS) are enriched in low complexity. Residues 43 to 64 (SSRHLSSSSSSDMSASDSSSSL) form a disordered region. Ser-56 is modified (N-acetylserine). Residues Tyr-173, 209–210 (AS), Tyr-235, Asn-291, Tyr-322, and 354–356 (SFQ) contribute to the pyridoxal 5'-phosphate site. Lys-360 is modified (N6-(pyridoxal phosphate)lysine). Residues Arg-369 and Asn-397 each contribute to the pyridoxal 5'-phosphate site.

The protein belongs to the class-I pyridoxal-phosphate-dependent aminotransferase family. Alanine aminotransferase subfamily. In terms of assembly, homodimer. Pyridoxal 5'-phosphate serves as cofactor. In terms of processing, the N-terminus is blocked. In terms of tissue distribution, mostly expressed in roots and shoots, mostly in vascular tissues, and, to a lower extent, in flowers and leaves.

The protein resides in the mitochondrion. The catalysed reaction is L-alanine + 2-oxoglutarate = pyruvate + L-glutamate. It participates in photosynthesis; C4 acid pathway. It functions in the pathway amino-acid degradation; L-alanine degradation via transaminase pathway; pyruvate from L-alanine: step 1/1. In terms of biological role, is the major alanine aminotransferase in roots that catalyzes the conversion of alanine to pyruvate. Involved in the rapid conversion of alanine to pyruvate during recovery from low-oxygen stress. This Arabidopsis thaliana (Mouse-ear cress) protein is Alanine aminotransferase 1, mitochondrial.